Consider the following 481-residue polypeptide: Uridine 5'-monophosphate synthase (481 aa).

Residues Met1–Leu214 form an OPRTase region. A Phosphotyrosine modification is found at Tyr37. The segment at Pro215 to Lys220 is domain linker. Positions Ala221 to Gln481 are OMPdecase. Ser257 lines the orotidine 5'-phosphate pocket. UMP contacts are provided by residues Ser257, Asp259, and Lys281 to His283. Residues Lys281, Lys314, Asp317, Thr321, Ser372, Gln430–Tyr432, and Gly450–Arg451 each bind orotidine 5'-phosphate. Active-site for OMPdecase activity residues include Lys314 and Asp317. UMP is bound by residues Asp317, Thr321, Ser372, Gln430–Tyr432, and Gly450–Arg451.

In the N-terminal section; belongs to the purine/pyrimidine phosphoribosyltransferase family. It in the C-terminal section; belongs to the OMP decarboxylase family. In terms of assembly, homodimer; dimerization is required for enzymatic activity.

It carries out the reaction orotidine 5'-phosphate + diphosphate = orotate + 5-phospho-alpha-D-ribose 1-diphosphate. The enzyme catalyses orotidine 5'-phosphate + H(+) = UMP + CO2. Its pathway is pyrimidine metabolism; UMP biosynthesis via de novo pathway; UMP from orotate: step 1/2. The protein operates within pyrimidine metabolism; UMP biosynthesis via de novo pathway; UMP from orotate: step 2/2. Its function is as follows. Bifunctional enzyme catalyzing the last two steps of de novo pyrimidine biosynthesis, orotate phosphoribosyltransferase (OPRT), which converts orotate to orotidine-5'-monophosphate (OMP), and orotidine-5'-monophosphate decarboxylase (ODC), the terminal enzymatic reaction that decarboxylates OMP to uridine monophosphate (UMP). This Mus musculus (Mouse) protein is Uridine 5'-monophosphate synthase (Umps).